Here is a 114-residue protein sequence, read N- to C-terminus: UPF0757 protein YmgG (114 aa).

It belongs to the UPF0757 family.

The polypeptide is UPF0757 protein YmgG (Shigella flexneri).